The primary structure comprises 331 residues: tRNA N6-adenosine threonylcarbamoyltransferase (331 aa).

Fe cation-binding residues include His-109, His-113, and Tyr-130. Residues 130-134, Asp-162, Asp-183, and Ser-262 contribute to the substrate site; that span reads YLSGG. Residue Asp-290 participates in Fe cation binding.

It belongs to the KAE1 / TsaD family. Requires Fe(2+) as cofactor.

It is found in the cytoplasm. The catalysed reaction is L-threonylcarbamoyladenylate + adenosine(37) in tRNA = N(6)-L-threonylcarbamoyladenosine(37) in tRNA + AMP + H(+). In terms of biological role, required for the formation of a threonylcarbamoyl group on adenosine at position 37 (t(6)A37) in tRNAs that read codons beginning with adenine. Is probably involved in the transfer of the threonylcarbamoyl moiety of threonylcarbamoyl-AMP (TC-AMP) to the N6 group of A37. This chain is tRNA N6-adenosine threonylcarbamoyltransferase, found in Saccharolobus islandicus (strain M.16.27) (Sulfolobus islandicus).